The chain runs to 523 residues: MFS-type transporter R5 (523 aa).

The interval 19–42 (QLNEATAQRESATNNPNDSSSIDE) is disordered. Positions 21–38 (NEATAQRESATNNPNDSS) are enriched in polar residues. 3 N-linked (GlcNAc...) asparagine glycosylation sites follow: asparagine 35, asparagine 94, and asparagine 143. 2 helical membrane passes run 183 to 203 (AYLT…GGLL) and 211 to 231 (AIFW…FTFF). N-linked (GlcNAc...) asparagine glycans are attached at residues asparagine 235 and asparagine 250. The next 6 helical transmembrane spans lie at 291–311 (FIVC…ISIF), 319–339 (YGYS…GSIL), 381–401 (LTIS…YGWL), 408–428 (VASV…VLIA), 443–463 (ALGA…VAAV), and 470–490 (IGIG…LPAL).

Belongs to the major facilitator superfamily.

The protein resides in the membrane. In terms of biological role, MFS-type transporter; part of the gene cluster that mediates the biosynthesis of squalestatin S1 (SQS1, also known as zaragozic acid A), a heavily oxidized fungal polyketide that offers potent cholesterol lowering activity by targeting squalene synthase (SS). This Phoma sp. (strain ATCC 20986 / MF5453) protein is MFS-type transporter R5.